A 1368-amino-acid chain; its full sequence is DNA-directed RNA polymerase subunit beta (1368 aa).

Belongs to the RNA polymerase beta chain family. As to quaternary structure, the RNAP catalytic core consists of 2 alpha, 1 beta, 1 beta' and 1 omega subunit. When a sigma factor is associated with the core the holoenzyme is formed, which can initiate transcription.

The enzyme catalyses RNA(n) + a ribonucleoside 5'-triphosphate = RNA(n+1) + diphosphate. In terms of biological role, DNA-dependent RNA polymerase catalyzes the transcription of DNA into RNA using the four ribonucleoside triphosphates as substrates. This Legionella pneumophila (strain Paris) protein is DNA-directed RNA polymerase subunit beta.